A 428-amino-acid chain; its full sequence is Light-independent protochlorophyllide reductase subunit N (428 aa).

Residues Cys29, Cys54, and Cys115 each coordinate [4Fe-4S] cluster.

Belongs to the BchN/ChlN family. As to quaternary structure, protochlorophyllide reductase is composed of three subunits; BchL, BchN and BchB. Forms a heterotetramer of two BchB and two BchN subunits. [4Fe-4S] cluster is required as a cofactor.

It carries out the reaction chlorophyllide a + oxidized 2[4Fe-4S]-[ferredoxin] + 2 ADP + 2 phosphate = protochlorophyllide a + reduced 2[4Fe-4S]-[ferredoxin] + 2 ATP + 2 H2O. It functions in the pathway porphyrin-containing compound metabolism; bacteriochlorophyll biosynthesis (light-independent). In terms of biological role, component of the dark-operative protochlorophyllide reductase (DPOR) that uses Mg-ATP and reduced ferredoxin to reduce ring D of protochlorophyllide (Pchlide) to form chlorophyllide a (Chlide). This reaction is light-independent. The NB-protein (BchN-BchB) is the catalytic component of the complex. The polypeptide is Light-independent protochlorophyllide reductase subunit N (Cereibacter sphaeroides (strain ATCC 17025 / ATH 2.4.3) (Rhodobacter sphaeroides)).